We begin with the raw amino-acid sequence, 646 residues long: Vitamin K-dependent protein S (646 aa).

Residues 1-12 (GHASQVLVRKRR) constitute a propeptide that is removed on maturation. Positions 13-58 (ANSMLEETKKGNLERECIEELCNKEEAREVFENDPETDYFYPKYLG) constitute a Gla domain. Residues Glu18, Glu19, Glu26, Glu28, Glu31, Glu32, Glu37, Glu38, Glu41, Glu44, and Glu48 each carry the 4-carboxyglutamate modification. The cysteines at positions 29 and 34 are disulfide-linked. The interval 59–87 (CLGSFRAKLFTATRRSANGYPDLRSCVNA) is thrombin-sensitive. The region spanning 88 to 126 (IPDQCNPLPCSEEGYLNCKDGQATFTCICKPGWQGEKCE) is the EGF-like 1 domain. 13 cysteine pairs are disulfide-bonded: Cys92–Cys105, Cys97–Cys114, Cys116–Cys125, Cys132–Cys146, Cys142–Cys155, Cys157–Cys170, Cys176–Cys188, Cys183–Cys197, Cys199–Cys212, Cys218–Cys227, Cys223–Cys236, Cys238–Cys253, and Cys420–Cys446. Residue Asp107 is modified to (3R)-3-hydroxyaspartate. Positions 128–171 (DINECKDPTNINGGCSQICDNTAGSYHCSCKSGFVMLANEKDCK) constitute an EGF-like 2; calcium-binding domain. In terms of domain architecture, EGF-like 3; calcium-binding spans 172 to 213 (DMDECSVKPSVCGTAVCKNTPGDFECECSEGYRYNPTAKSCE). The EGF-like 4; calcium-binding domain maps to 214-254 (DIDECSENMCAQLCVNYPGGYSCYCDGKKGFKLAQDKKSCE). Laminin G-like domains lie at 270–446 (LLYL…KKHC) and 455–636 (YYPG…AHSC). Asn470 and Asn480 each carry an N-linked (GlcNAc...) asparagine glycan. Cys609 and Cys636 are disulfide-bonded.

Interacts with C4b-binding protein, a regulator of the complex system. In rabbit plasma however, protein S appears to be present only in free form. Post-translationally, the iron and 2-oxoglutarate dependent 3-hydroxylation of aspartate and asparagine is (R) stereospecific within EGF domains. As to expression, plasma.

The protein localises to the secreted. Its function is as follows. Anticoagulant plasma protein; it is a cofactor to activated protein C in the degradation of coagulation factors Va and VIIIa. It helps to prevent coagulation and stimulating fibrinolysis. The sequence is that of Vitamin K-dependent protein S (PROS1) from Oryctolagus cuniculus (Rabbit).